The primary structure comprises 337 residues: tRNA N6-adenosine threonylcarbamoyltransferase (337 aa).

His-111 and His-115 together coordinate Fe cation. Substrate contacts are provided by residues 134-138 (LVSGG), Asp-167, Gly-180, and Asn-272. Asp-300 is a binding site for Fe cation.

Belongs to the KAE1 / TsaD family. It depends on Fe(2+) as a cofactor.

It is found in the cytoplasm. The catalysed reaction is L-threonylcarbamoyladenylate + adenosine(37) in tRNA = N(6)-L-threonylcarbamoyladenosine(37) in tRNA + AMP + H(+). Required for the formation of a threonylcarbamoyl group on adenosine at position 37 (t(6)A37) in tRNAs that read codons beginning with adenine. Is involved in the transfer of the threonylcarbamoyl moiety of threonylcarbamoyl-AMP (TC-AMP) to the N6 group of A37, together with TsaE and TsaB. TsaD likely plays a direct catalytic role in this reaction. In Salmonella choleraesuis (strain SC-B67), this protein is tRNA N6-adenosine threonylcarbamoyltransferase.